A 275-amino-acid chain; its full sequence is Acetyl-coenzyme A carboxylase carboxyl transferase subunit beta (275 aa).

The CoA carboxyltransferase N-terminal domain occupies 21-275 (GLWIKCQCGA…IKIIGMHQAG (255 aa)). Cys-26, Cys-28, Cys-44, and Cys-47 together coordinate Zn(2+). The segment at 26–47 (CQCGAILFAKDLERNLKVCQKC) adopts a C4-type zinc-finger fold.

The protein belongs to the AccD/PCCB family. Acetyl-CoA carboxylase is a heterohexamer composed of biotin carboxyl carrier protein (AccB), biotin carboxylase (AccC) and two subunits each of ACCase subunit alpha (AccA) and ACCase subunit beta (AccD). The cofactor is Zn(2+).

The protein localises to the cytoplasm. The enzyme catalyses N(6)-carboxybiotinyl-L-lysyl-[protein] + acetyl-CoA = N(6)-biotinyl-L-lysyl-[protein] + malonyl-CoA. It functions in the pathway lipid metabolism; malonyl-CoA biosynthesis; malonyl-CoA from acetyl-CoA: step 1/1. Its function is as follows. Component of the acetyl coenzyme A carboxylase (ACC) complex. Biotin carboxylase (BC) catalyzes the carboxylation of biotin on its carrier protein (BCCP) and then the CO(2) group is transferred by the transcarboxylase to acetyl-CoA to form malonyl-CoA. The chain is Acetyl-coenzyme A carboxylase carboxyl transferase subunit beta from Desulforudis audaxviator (strain MP104C).